A 435-amino-acid chain; its full sequence is Sex peptide receptor (435 aa).

At 1–93 (MDNYTDVLYQ…PLEYAMPLYG (93 aa)) the chain is on the extracellular side. The chain crosses the membrane as a helical span at residues 94-114 (YCMPFLLIITIISNSLIVLVL). The Cytoplasmic portion of the chain corresponds to 115 to 124 (SKKSMATPTN). A helical transmembrane segment spans residues 125–145 (FVLMGMAICDMLTVIFPAPGL). Residues 146-168 (WYMYTFGNHYKPLHPVSMCLAYS) are Extracellular-facing. A helical transmembrane segment spans residues 169-189 (IFNEIMPAMCHTISVWLTLAL). At 190–211 (AVQRYIYVCHAPMARTWCTMPR) the chain is on the cytoplasmic side. Residues 212–229 (VRRCTAYIALLAFLHQLP) form a helical membrane-spanning segment. Over 230–276 (RFFDRTYMPLVIEWNGSPTEVCHLETSMWVHDYIGVDLYYTSYYLFR) the chain is Extracellular. Residues 277 to 297 (VLFVHLLPCIILVTLNILLFA) form a helical membrane-spanning segment. At 298 to 327 (AMRQAQERRKLLFRENRKKECKKLRETNCT) the chain is on the cytoplasmic side. Residues 328–348 (TLMLIVVVSVFLLAEIPIAVV) traverse the membrane as a helical segment. The Extracellular segment spans residues 349–368 (TAMHIVSSLIIEFLDYGLAN). A helical transmembrane segment spans residues 369 to 389 (ICIMLTNFFLVFSYPINFGIY). Topologically, residues 390 to 435 (CGMSRQFRETFKEIFLGRLMAKKDSSTKYSIVNGARTCTNTNETVL) are cytoplasmic.

It belongs to the G-protein coupled receptor 1 family. In terms of tissue distribution, in the female, expressed in the reproductive organs; strongly expressed in the spermathecae and the lower oviduct. No expression in the male reproductive organs. In the central nervous system of both sexes, it is expressed in the brain and ventral nerve cord (VNC); strongly expressed in the ventral regions of the suboesophageal ganglion, the cervical connective and in many nerve roots of the brain and VNC. Expressed in the s-LNvs and l-LNvs pdf neurons (at protein level).

The protein localises to the cell membrane. Functionally, receptor for two functionally unrelated ligands; SP (A70A) for controlling reproductive behaviors and MIP for controlling sleep behavior. MIP-SPR pathway functions as a sleep homeostat which perceives the need for sleep and stabilizes it by providing a slow-acting inhibitory input to the fly arousal system that involve the pigment dispersing factor (pdf) neurons. SP-SPR is one of the multiple SP pathways that induce female post-mating behavioral responses (PMR) such as the suppression of mating receptivity and initiation of egg laying. The PMR switch is achieved by mediating the synaptic output of neurons such as those expressing fruitless (fru), double sex (dsx) and pickpocket (ppk). The chain is Sex peptide receptor from Drosophila melanogaster (Fruit fly).